Here is a 360-residue protein sequence, read N- to C-terminus: Photosystem II protein D1 (360 aa).

The next 3 membrane-spanning stretches (helical) occupy residues 29 to 46, 118 to 133, and 142 to 156; these read YIGW…TATS, HFLL…EWEF, and WISV…AASA. H118 contacts chlorophyll a. Y126 contributes to the pheophytin a binding site. Residues D170 and E189 each coordinate [CaMn4O5] cluster. Residues 197-218 form a helical membrane-spanning segment; that stretch reads LHQLGVAGVFGGSLFSAMHGSL. Residue H198 coordinates chlorophyll a. A quinone is bound by residues H215 and 264–265; that span reads SF. H215 is a Fe cation binding site. H272 contacts Fe cation. Residues 274-288 traverse the membrane as a helical segment; that stretch reads FLGLWPVVGIWFTSM. The [CaMn4O5] cluster site is built by H332, E333, D342, and A344. A propeptide spanning residues 345 to 360 is cleaved from the precursor; that stretch reads SNESLPLALVAPAING.

It belongs to the reaction center PufL/M/PsbA/D family. PSII is composed of 1 copy each of membrane proteins PsbA, PsbB, PsbC, PsbD, PsbE, PsbF, PsbH, PsbI, PsbJ, PsbK, PsbL, PsbM, PsbT, PsbX, PsbY, PsbZ, Psb30/Ycf12, at least 3 peripheral proteins of the oxygen-evolving complex and a large number of cofactors. It forms dimeric complexes. The D1/D2 heterodimer binds P680, chlorophylls that are the primary electron donor of PSII, and subsequent electron acceptors. It shares a non-heme iron and each subunit binds pheophytin, quinone, additional chlorophylls, carotenoids and lipids. D1 provides most of the ligands for the Mn4-Ca-O5 cluster of the oxygen-evolving complex (OEC). There is also a Cl(-1) ion associated with D1 and D2, which is required for oxygen evolution. The PSII complex binds additional chlorophylls, carotenoids and specific lipids. serves as cofactor. In terms of processing, tyr-161 forms a radical intermediate that is referred to as redox-active TyrZ, YZ or Y-Z. Post-translationally, C-terminally processed by CTPA; processing is essential to allow assembly of the oxygen-evolving complex and thus photosynthetic growth.

The protein resides in the plastid. The protein localises to the chloroplast thylakoid membrane. The enzyme catalyses 2 a plastoquinone + 4 hnu + 2 H2O = 2 a plastoquinol + O2. Photosystem II (PSII) is a light-driven water:plastoquinone oxidoreductase that uses light energy to abstract electrons from H(2)O, generating O(2) and a proton gradient subsequently used for ATP formation. It consists of a core antenna complex that captures photons, and an electron transfer chain that converts photonic excitation into a charge separation. The D1/D2 (PsbA/PsbD) reaction center heterodimer binds P680, the primary electron donor of PSII as well as several subsequent electron acceptors. This chain is Photosystem II protein D1, found in Antithamnion sp. (Red alga).